A 127-amino-acid chain; its full sequence is Apolipoprotein C-IV (127 aa).

An N-terminal signal peptide occupies residues 1 to 27 (MSLLRNRLQDLPALCLCVLVLACIGAC).

This sequence belongs to the apolipoprotein C4 family.

The protein resides in the secreted. In terms of biological role, may participate in lipoprotein metabolism. This is Apolipoprotein C-IV (APOC4) from Papio anubis (Olive baboon).